We begin with the raw amino-acid sequence, 688 residues long: Mitochondrial potassium channel ATP-binding subunit (688 aa).

The transit peptide at 1–31 directs the protein to the mitochondrion; sequence MLFHFLQAGLRQCRPPARLVGLETGLSGARG. 4 consecutive transmembrane segments (helical) span residues 115-135, 168-188, 268-288, and 342-362; these read PQLIALLTAVLLAFGAALLNI, LKLLCLYGAQGLLTCGYIVLL, GLLLVVMPVLVGSGALIGSFL, and VLGVGIAVFQGLSNVVLNCIV. Residues 121 to 409 enclose the ABC transmembrane type-1 domain; sequence LTAVLLAFGA…MSVLFGQVVR (289 aa). The ABC transporter domain occupies 442-679; it reads IHFKDVSFSY…GGLYADLIRR (238 aa). ATP is bound at residue 477 to 484; the sequence is GQSGGGKS.

Belongs to the ABC transporter superfamily. ABCB family. Multidrug resistance exporter (TC 3.A.1.201) subfamily. In terms of assembly, component of the mitochondrial potassium channel (mitoK(ATP)).

The protein localises to the mitochondrion inner membrane. ATP-binding subunit of the mitochondrial ATP-gated potassium channel (mitoK(ATP)). Together with pore-forming subunit CCDC51/MITOK of the mitoK(ATP) channel, mediates ATP-dependent potassium currents across the mitochondrial inner membrane. An increase in ATP intracellular levels closes the channel, inhibiting K(+) transport, whereas a decrease in ATP levels enhances K(+) uptake in the mitochondrial matrix. Plays a role in mitochondrial iron transport. Required for maintenance of normal cardiac function, possibly by influencing mitochondrial iron export and regulating the maturation of cytosolic iron sulfur cluster-containing enzymes. This Xenopus tropicalis (Western clawed frog) protein is Mitochondrial potassium channel ATP-binding subunit.